Here is a 316-residue protein sequence, read N- to C-terminus: Thymidylate synthase (316 aa).

DUMP is bound by residues R23 and 178 to 179; that span reads RR. C198 (nucleophile) is an active-site residue. Residues 218–221, N229, and 259–261 contribute to the dUMP site; these read RSAD and HLY. Position 221 (D221) interacts with (6R)-5,10-methylene-5,6,7,8-tetrahydrofolate. Residue A315 participates in (6R)-5,10-methylene-5,6,7,8-tetrahydrofolate binding.

This sequence belongs to the thymidylate synthase family. Bacterial-type ThyA subfamily. As to quaternary structure, homodimer.

It is found in the cytoplasm. The enzyme catalyses dUMP + (6R)-5,10-methylene-5,6,7,8-tetrahydrofolate = 7,8-dihydrofolate + dTMP. It functions in the pathway pyrimidine metabolism; dTTP biosynthesis. Its function is as follows. Catalyzes the reductive methylation of 2'-deoxyuridine-5'-monophosphate (dUMP) to 2'-deoxythymidine-5'-monophosphate (dTMP) while utilizing 5,10-methylenetetrahydrofolate (mTHF) as the methyl donor and reductant in the reaction, yielding dihydrofolate (DHF) as a by-product. This enzymatic reaction provides an intracellular de novo source of dTMP, an essential precursor for DNA biosynthesis. This Lacticaseibacillus paracasei (strain ATCC 334 / BCRC 17002 / CCUG 31169 / CIP 107868 / KCTC 3260 / NRRL B-441) (Lactobacillus paracasei) protein is Thymidylate synthase.